Reading from the N-terminus, the 108-residue chain is Large ribosomal subunit protein uL24 (108 aa).

The protein belongs to the universal ribosomal protein uL24 family. In terms of assembly, part of the 50S ribosomal subunit.

In terms of biological role, one of two assembly initiator proteins, it binds directly to the 5'-end of the 23S rRNA, where it nucleates assembly of the 50S subunit. Its function is as follows. One of the proteins that surrounds the polypeptide exit tunnel on the outside of the subunit. This is Large ribosomal subunit protein uL24 from Geobacter sulfurreducens (strain ATCC 51573 / DSM 12127 / PCA).